A 1083-amino-acid polypeptide reads, in one-letter code: Ubiquitin-protein ligase E3C (1083 aa).

Composition is skewed to basic and acidic residues over residues 1 to 10 and 20 to 40; these read MFSFEGDFKT and SRKE…RKRE. The interval 1–40 is disordered; the sequence is MFSFEGDFKTRPKVSLGGASRKEEKASLLHRTQEERRKRE. Residues 1–60 form a cis-determinant of acceptor ubiquitin-binding region; it reads MFSFEGDFKTRPKVSLGGASRKEEKASLLHRTQEERRKREEERRRLKNAIIIQSFIRGYR. Residues 45 to 74 form the IQ domain; that stretch reads RLKNAIIIQSFIRGYRDRKQQYSIQRSAFD. The interval 355–385 is disordered; it reads SPASASCHDSASDSEEESEEADKPSSPEDGR. Positions 375-385 are enriched in basic and acidic residues; the sequence is ADKPSSPEDGR. The HECT domain maps to 744 to 1083; sequence NEPDLKKRIR…IECAAGFELS (340 aa). K903 is covalently cross-linked (Glycyl lysine isopeptide (Lys-Gly) (interchain with G-Cter in ubiquitin); by autocatalysis). The Glycyl thioester intermediate role is filled by C1051.

It belongs to the UBE3C family. As to quaternary structure, interacts with 26S proteasomes. Interacts (via the HECT domain) with UBE2D1 and, less efficiently, with UBE2L3. Post-translationally, autoubiquitinated; promoting its own degradation. In terms of tissue distribution, highly expressed in skeletal muscle. Detected at much lower levels in kidney and pancreas.

It catalyses the reaction S-ubiquitinyl-[E2 ubiquitin-conjugating enzyme]-L-cysteine + [acceptor protein]-L-lysine = [E2 ubiquitin-conjugating enzyme]-L-cysteine + N(6)-ubiquitinyl-[acceptor protein]-L-lysine.. Its pathway is protein modification; protein ubiquitination. Functionally, E3 ubiquitin-protein ligase that specifically catalyzes 'Lys-29'- and 'Lys-48'-linked polyubiquitin chains. Accepts ubiquitin from the E2 ubiquitin-conjugating enzyme UBE2D1 in the form of a thioester and then directly transfers the ubiquitin to targeted substrates. Associates with the proteasome and promotes elongation of ubiquitin chains on substrates bound to the 26S proteasome. Also catalyzes 'Lys-29'- and 'Lys-48'-linked ubiquitination of 26S proteasome subunit ADRM1/RPN13 in response to proteotoxic stress, impairing the ability of the proteasome to bind and degrade ubiquitin-conjugated proteins. Acts as a negative regulator of autophagy by mediating 'Lys-29'- and 'Lys-48'-linked ubiquitination of PIK3C3/VPS34, promoting its degradation. Can assemble unanchored poly-ubiquitin chains in either 'Lys-29'- or 'Lys-48'-linked polyubiquitin chains; with some preference for 'Lys-48' linkages. Acts as a negative regulator of type I interferon by mediating 'Lys-48'-linked ubiquitination of IRF3 and IRF7, leading to their degradation by the proteasome. Catalyzes ubiquitination and degradation of CAND2. In Homo sapiens (Human), this protein is Ubiquitin-protein ligase E3C.